Consider the following 433-residue polypeptide: Phosphomethylpyrimidine synthase 1 (433 aa).

Substrate-binding positions include asparagine 66, methionine 94, tyrosine 123, histidine 162, 184-186 (SRG), 225-228 (DALR), and glutamate 264. Histidine 268 is a Zn(2+) binding site. Tyrosine 291 is a substrate binding site. Zn(2+) is bound at residue histidine 332. [4Fe-4S] cluster-binding residues include cysteine 408, cysteine 411, and cysteine 415.

It belongs to the ThiC family. The cofactor is [4Fe-4S] cluster.

It catalyses the reaction 5-amino-1-(5-phospho-beta-D-ribosyl)imidazole + S-adenosyl-L-methionine = 4-amino-2-methyl-5-(phosphooxymethyl)pyrimidine + CO + 5'-deoxyadenosine + formate + L-methionine + 3 H(+). It participates in cofactor biosynthesis; thiamine diphosphate biosynthesis. Catalyzes the synthesis of the hydroxymethylpyrimidine phosphate (HMP-P) moiety of thiamine from aminoimidazole ribotide (AIR) in a radical S-adenosyl-L-methionine (SAM)-dependent reaction. The sequence is that of Phosphomethylpyrimidine synthase 1 from Saccharolobus solfataricus (strain ATCC 35092 / DSM 1617 / JCM 11322 / P2) (Sulfolobus solfataricus).